We begin with the raw amino-acid sequence, 436 residues long: 3-ketoacyl-CoA thiolase (436 aa).

The Acyl-thioester intermediate role is filled by Cys99. Residues His392 and Cys422 each act as proton acceptor in the active site.

This sequence belongs to the thiolase-like superfamily. Thiolase family. In terms of assembly, heterotetramer of two alpha chains (FadJ) and two beta chains (FadI).

It localises to the cytoplasm. It catalyses the reaction an acyl-CoA + acetyl-CoA = a 3-oxoacyl-CoA + CoA. The protein operates within lipid metabolism; fatty acid beta-oxidation. Its function is as follows. Catalyzes the final step of fatty acid oxidation in which acetyl-CoA is released and the CoA ester of a fatty acid two carbons shorter is formed. This is 3-ketoacyl-CoA thiolase from Yersinia pseudotuberculosis serotype O:1b (strain IP 31758).